Consider the following 325-residue polypeptide: All-trans-nonaprenyl-diphosphate synthase (geranyl-diphosphate specific) (325 aa).

Isopentenyl diphosphate-binding residues include Lys-48, Arg-51, and His-81. Mg(2+)-binding residues include Asp-88 and Asp-92. Arg-97 contributes to the an all-trans-polyprenyl diphosphate binding site. Arg-98 lines the isopentenyl diphosphate pocket. Residues Lys-174, Thr-175, Gln-211, and Lys-228 each coordinate an all-trans-polyprenyl diphosphate.

The protein belongs to the FPP/GGPP synthase family. As to quaternary structure, homodimer. Mg(2+) is required as a cofactor.

It catalyses the reaction 7 isopentenyl diphosphate + (2E)-geranyl diphosphate = all-trans-nonaprenyl diphosphate + 7 diphosphate. Catalyzes the sequential condensation of isopentenyl diphosphate (IPP) with the allylic substrate to give solanesyl diphosphate. Could be important to determine the side chain length of ubiquinone. This is All-trans-nonaprenyl-diphosphate synthase (geranyl-diphosphate specific) (sdsA) from Rhodobacter capsulatus (Rhodopseudomonas capsulata).